A 168-amino-acid polypeptide reads, in one-letter code: Small ribosomal subunit protein uS5 (168 aa).

In terms of domain architecture, S5 DRBM spans 11 to 74; that stretch reads YSEKVVKIDR…EAAKKHLVKI (64 aa).

The protein belongs to the universal ribosomal protein uS5 family. Part of the 30S ribosomal subunit. Contacts proteins S4 and S8.

With S4 and S12 plays an important role in translational accuracy. Functionally, located at the back of the 30S subunit body where it stabilizes the conformation of the head with respect to the body. The polypeptide is Small ribosomal subunit protein uS5 (Leptospira borgpetersenii serovar Hardjo-bovis (strain JB197)).